A 600-amino-acid chain; its full sequence is Elongation factor 4 (600 aa).

Residues 5–187 (SRIRNFSIIA…AIVTRLPPPK (183 aa)) form the tr-type G domain. GTP is bound by residues 17–22 (DHGKST) and 134–137 (NKID).

The protein belongs to the TRAFAC class translation factor GTPase superfamily. Classic translation factor GTPase family. LepA subfamily.

Its subcellular location is the cell inner membrane. The enzyme catalyses GTP + H2O = GDP + phosphate + H(+). In terms of biological role, required for accurate and efficient protein synthesis under certain stress conditions. May act as a fidelity factor of the translation reaction, by catalyzing a one-codon backward translocation of tRNAs on improperly translocated ribosomes. Back-translocation proceeds from a post-translocation (POST) complex to a pre-translocation (PRE) complex, thus giving elongation factor G a second chance to translocate the tRNAs correctly. Binds to ribosomes in a GTP-dependent manner. The protein is Elongation factor 4 of Rhodospirillum centenum (strain ATCC 51521 / SW).